A 288-amino-acid chain; its full sequence is Protein-S-isoprenylcysteine O-methyltransferase (288 aa).

The chain crosses the membrane as a helical span at residues 13–29; it reads SIVSFTLGASVISLPLL. Topologically, residues 30–45 are lumenal; that stretch reads TSSFTEQTLLAAAPGR. Residues 46 to 63 traverse the membrane as a helical segment; that stretch reads IALVFFIAALNGLLLLLY. Over 64–73 the chain is Cytoplasmic; it reads KAQLYQVAIR. A helical transmembrane segment spans residues 74–91; it reads ASFLGFAFGCGLLLSITQ. The Lumenal segment spans residues 92–96; that stretch reads SPWKP. A helical transmembrane segment spans residues 97 to 116; sequence FGWYVCSLSFFHYSEYLVTA. Residues 117-135 lie on the Cytoplasmic side of the membrane; sequence MNNPRSLSIDSFLLNHSLE. A helical membrane pass occupies residues 136 to 153; sequence YTLAALSSWVEFTIETTI. Residues 154–158 lie on the Lumenal side of the membrane; the sequence is YPDLK. The helical transmembrane segment at 159–178 threads the bilayer; the sequence is QITWLSVIGLIMVLFGEVLR. The Cytoplasmic portion of the chain corresponds to 179-216; the sequence is KCAMLTAGSNFNHIVQNEKSDSHTLVTSGVYSWFRHPS. S-adenosyl-L-methionine-binding positions include Gln-194, 201 to 204, Tyr-209, and 214 to 217; these read HTLV and HPSY. A helical transmembrane segment spans residues 217-232; it reads YVGWFYWSIGTQVLLC. A topological domain (lumenal) is located at residue Asn-233. A helical membrane pass occupies residues 234 to 248; it reads PLCLVGYTLASWRFF. Over 249–288 the chain is Cytoplasmic; it reads SERIEEEEFSLIHFFGENYLEYKKKVPTGLPFIKGVKMEP. Arg-251 contacts substrate. Glu-255 contributes to the S-adenosyl-L-methionine binding site.

Belongs to the class VI-like SAM-binding methyltransferase superfamily. Isoprenylcysteine carboxyl methyltransferase family.

Its subcellular location is the endoplasmic reticulum membrane. The catalysed reaction is [protein]-C-terminal S-[(2E,6E)-farnesyl]-L-cysteine + S-adenosyl-L-methionine = [protein]-C-terminal S-[(2E,6E)-farnesyl]-L-cysteine methyl ester + S-adenosyl-L-homocysteine. In terms of biological role, catalyzes the post-translational methylation of isoprenylated C-terminal cysteine residues. The protein is Protein-S-isoprenylcysteine O-methyltransferase (icmt) of Xenopus laevis (African clawed frog).